An 884-amino-acid chain; its full sequence is MIQQYLKVKADYQDAFLFFRLGDFYEMFFEDAVKAAHELEITLTSRDGGSSERIPMCGVPYHAAKNYIEQLVEKGYKVAVCEQVEDPKTAKGVVRREVVQLITPGTMMEGRTIDEKENNFLAALTHFEDGSYALACNDLTTGQNTVTLLTGSVEDILLEVYATGSKEIVVDSSFSKDELNKLTETLKMTISYEDATAIPEGLEHLVKNVSQAKLIKAVGRLFNYVIRTQKRSLDHLQPVEIYYTNQFMKIDVHSKRNLELTETLRTKEKTGSLLWLLDKTKTAMGGRMLKQWMERPLIQKERIEERLEMVETFVNDYFLREDLKEKLKEVYDLERLAGKVAFGNVNARDLLQLRRSLLQVPAILEAISLLDNAYASRLIQGADPCESLTELLGRSIQENPPLSIKDGDIIKDGYNDKLDQYRYVSKNGKTWIAELEKRERDITGIKSLKIGYNRIFGYYIEVTKANLAALPEGRYERKQTLANAERFITDELKEKETLILEAEEKIVQLEYDLFTALREEVKVFIPKLQHLAKVISELDVLQSFATVSEEEQFVKLVLTTKREIFIKDGRHPVVEKVLNGKLYVPNDCIMPEKMDVFLITGPNMSGKSTYMRQLALVTVMSQIGCFVPATEAVLPVFDQIFTRIGAADDLISGQSTFMVEMLEAKNAIANASERSLILFDEIGRGTSTYDGMALAQAIIEHIHDQIGAKTLFSTHYHELTVLEESLDQLKNVHVSAIEENGKVVFLHKIQDGAADKSYGIHVAQLAELPDSLIARAKEVLAQLEGQEEIIIPKRVEVKVQEAAPEPVVVKEEIAEIQETKVETEEESQLSFFGGEQSSKKQDKPLLDQKETAVLAQIKKIDLLDMTPLEAMNELYRLQKKLKKG.

601-608 (GPNMSGKS) is a binding site for ATP. A disordered region spans residues 826–845 (ESQLSFFGGEQSSKKQDKPL).

The protein belongs to the DNA mismatch repair MutS family.

This protein is involved in the repair of mismatches in DNA. It is possible that it carries out the mismatch recognition step. This protein has a weak ATPase activity. The chain is DNA mismatch repair protein MutS from Bacillus cereus (strain ATCC 14579 / DSM 31 / CCUG 7414 / JCM 2152 / NBRC 15305 / NCIMB 9373 / NCTC 2599 / NRRL B-3711).